Here is a 478-residue protein sequence, read N- to C-terminus: MKFSTILPILWANCCLCMIIPDFDGIVRFIENIDGTRSVRAGEGLGQHDPGNFHTEHQHVAHKTEFLPYRYVIVFNEDISLQQIQSHMQVVQKDHSTSVGKLTENDAFWRVISSSVSSKSQFGGIDNFFDINGLFRGYTGYFTDEIIKIISQDPIIKFVEQETTVKISNSSLQEEAPWGLHRVSHREKPKYGQDLEYLYEDAAGKGVTSYVLDTGIDTEHEDFEGRAEWGAVIPANDEASDLNGHGTHCAGIIGSKHFGVAKNTKIVAVKVLRSNGEGTVSDVIKGIEYVTKEHIESSKKKNKEFKGSTANLSLGSSKSLAMEMAVNAAVDSGVHFAIAAGNEDEDACLSSPAGAEKSITVGASTFSDDRAFFSNWGTCVDVFAPGINIMSTYIGSRNATLSLSGTSMASPHVAGILSYFLSLQPAPDSEFFNDAPSPQELKEKVLKFSTQGVLGDIGDDTPNKLIYNGGGKKLDGFW.

The N-terminal stretch at M1–C17 is a signal peptide. The Inhibitor I9 domain maps to R70–I167. In terms of domain architecture, Peptidase S8 spans P177 to W478. Catalysis depends on charge relay system residues D213, H245, and S407.

This sequence belongs to the peptidase S8 family.

Serine protease with unknown substrate. In Saccharomyces cerevisiae (strain ATCC 204508 / S288c) (Baker's yeast), this protein is Subtilisin-like protease 3 (YSP3).